A 273-amino-acid chain; its full sequence is SUMO-1 cysteine protease S273R (273 aa).

Active-site residues include H168 and N187. Q226 lines the substrate pocket. C232 serves as the catalytic Nucleophile.

It belongs to the peptidase C63 family.

Its subcellular location is the host cytoplasm. The protein localises to the virion. Its function is as follows. Cysteine protease that plays several role during infection including processing of the structural polyprotein or inhibition of the host immune response. Catalyzes the maturation of the pp220 and pp62 polyprotein precursors into core-shell proteins. Plays a role in the disruption of host pyroptosis via specific cleavage of gasdermin D/GSDMD. In addition, strongly decreases the host cGAS-STING signaling by targeting IKBKE via its enzymatic activity. Also impairs host FOXJ1-mediated antiviral effect via degradation of FOXJ1. This Ornithodoros (relapsing fever ticks) protein is SUMO-1 cysteine protease S273R.